We begin with the raw amino-acid sequence, 521 residues long: Vang-like protein 2 (521 aa).

The interval 1 to 81 is disordered; it reads MDTESQYSGY…TTVVTGTSEH (81 aa). Residues 1-108 lie on the Cytoplasmic side of the membrane; it reads MDTESQYSGY…VPLDCSRHLG (108 aa). Residues 15–33 are compositionally biased toward basic residues; that stretch reads GHSRSSRKHRDRRDRHRSK. A compositionally biased stretch (basic and acidic residues) spans 57-67; it reads ESTRGDERDDN. Over residues 69–81 the composition is skewed to low complexity; it reads GETTTVVTGTSEH. The chain crosses the membrane as a helical span at residues 109-129; that stretch reads VAAGAILALLSFLTPLAFLLL. Residues 130–147 lie on the Extracellular side of the membrane; it reads PPLLWREELEPCGTACEG. Residues 148–168 form a helical membrane-spanning segment; sequence LFISVAFKLLILLLGSWALFF. The Cytoplasmic segment spans residues 169-178; that stretch reads RRPKASLPRV. The helical transmembrane segment at 179–199 threads the bilayer; the sequence is FVLRALLMVLVFLLVISYWLF. The Extracellular segment spans residues 200–217; that stretch reads YGVRILDARERSYQGVVQ. Residues 218-238 traverse the membrane as a helical segment; it reads FAVSLVDALLFVHYLAVVLLE. Residues 239-521 are Cytoplasmic-facing; it reads LRQLQPQFTL…VMRLQSETSV (283 aa).

This sequence belongs to the Vang family. In terms of assembly, homodimer and heterodimer with Vangl1. Interacts through its C-terminal region with the N-terminal half of DVL1, DVL2 and DVL3. The PDZ domain of DVL1, DVL2 and DVL3 is required for the interaction. Variants Glu-255 and Asn-464 impair interaction with the DVL proteins. Also interacts with the PDZ domains of MAGI3, SCRIB/SCRB1 and FZD3. Interacts with PRICKLE3. As to expression, primarily expressed in the brain and epididymis. Not detected in the cochlea of Lp mice.

Its subcellular location is the cell membrane. Its function is as follows. Involved in the control of early morphogenesis and patterning of both axial midline structures and the development of neural plate. Plays a role in the regulation of planar cell polarity, particularly in the orientation of stereociliary bundles in the cochlea. Required for polarization and movement of myocardializing cells in the outflow tract and seems to act via RHOA signaling to regulate this process. Required for cell surface localization of FZD3 and FZD6 in the inner ear. The chain is Vang-like protein 2 (Vangl2) from Mus musculus (Mouse).